A 215-amino-acid chain; its full sequence is tRNA (guanine-N(7)-)-methyltransferase (215 aa).

Residues E43, E68, D95, and D117 each contribute to the S-adenosyl-L-methionine site. D117 is a catalytic residue. Residues K121, D153, and 190-193 contribute to the substrate site; that span reads TEYE.

It belongs to the class I-like SAM-binding methyltransferase superfamily. TrmB family.

It catalyses the reaction guanosine(46) in tRNA + S-adenosyl-L-methionine = N(7)-methylguanosine(46) in tRNA + S-adenosyl-L-homocysteine. Its pathway is tRNA modification; N(7)-methylguanine-tRNA biosynthesis. Catalyzes the formation of N(7)-methylguanine at position 46 (m7G46) in tRNA. The polypeptide is tRNA (guanine-N(7)-)-methyltransferase (Staphylococcus epidermidis (strain ATCC 35984 / DSM 28319 / BCRC 17069 / CCUG 31568 / BM 3577 / RP62A)).